A 166-amino-acid chain; its full sequence is uncharacterized protein (166 aa).

2 stretches are compositionally biased toward gly residues: residues 1–10 and 76–86; these read MNYGNNGGGQ and YRGGGGGGGGN. The tract at residues 1 to 117 is disordered; the sequence is MNYGNNGGGQ…GGGNKNFGPI (117 aa).

This is an uncharacterized protein from Caenorhabditis elegans.